A 31-amino-acid polypeptide reads, in one-letter code: Nemertide alpha-6 (31 aa).

3 disulfides stabilise this stretch: Cys2-Cys16, Cys9-Cys20, and Cys15-Cys26. 4-hydroxyproline is present on residues Pro28 and Pro29.

Belongs to the nemertide family. As to expression, confined to the epidermis and to the mucus layer.

The protein localises to the secreted. Functionally, highly potent toxin against both insect and some mammalian sodium channels (Nav). It potently inhibits inactivation of insect sodium channels of B.germanica (BgNav1) (EC(50)=2.6 nM) and also delays the inactivation of mammalian Nav with potent activity on Nav1.1/SCN1A (hNav1.1/SCN1A; EC(50)=7.9 nM, rNav1.2/SCN2A; EC(50)=24.3 nM, rNav1.3/SCN3A; EC(50)=105.6 nM, rNav1.4/SCN4A; EC(50)=46.4 nM, hNav1.5/SCN5A; EC(50)=215.2 nM, mNav1.6/SCN8A; EC(50)=36.3 nM, hNav1.9/SCN9A; EC(50)=97.2 nM). 1 uM is enough to completely inhibits the inactivation, resulting in sustained non-inactivating currents. In addition, the toxin significantly enhances the recovery from inactivation, and the open state is not required for the toxin to interact with the channel. In vivo, injection into brine shrimp (Artemia salina) stops movement or causes death after 24 hours (EC(50)=2.8 uM). The chain is Nemertide alpha-6 from Lineus sanguineus (Ribbon worm).